Here is a 475-residue protein sequence, read N- to C-terminus: UDP-N-acetylmuramate--L-alanine ligase (475 aa).

An ATP-binding site is contributed by 119-125; that stretch reads GTHGKTT.

Belongs to the MurCDEF family.

It localises to the cytoplasm. The enzyme catalyses UDP-N-acetyl-alpha-D-muramate + L-alanine + ATP = UDP-N-acetyl-alpha-D-muramoyl-L-alanine + ADP + phosphate + H(+). The protein operates within cell wall biogenesis; peptidoglycan biosynthesis. Cell wall formation. This chain is UDP-N-acetylmuramate--L-alanine ligase, found in Wigglesworthia glossinidia brevipalpis.